Here is a 459-residue protein sequence, read N- to C-terminus: tRNA modification GTPase MnmE (459 aa).

3 residues coordinate (6S)-5-formyl-5,6,7,8-tetrahydrofolate: R20, E85, and R124. Residues 221–380 form the TrmE-type G domain; that stretch reads GLSTVIIGRP…LEEAIQSLFY (160 aa). A K(+)-binding site is contributed by N231. Residues 231-236, 250-256, and 275-278 each bind GTP; these read NVGKSS, TDIPGTT, and DTAG. A Mg(2+)-binding site is contributed by S235. Positions 250, 252, and 255 each coordinate K(+). T256 contributes to the Mg(2+) binding site. K459 lines the (6S)-5-formyl-5,6,7,8-tetrahydrofolate pocket.

Belongs to the TRAFAC class TrmE-Era-EngA-EngB-Septin-like GTPase superfamily. TrmE GTPase family. Homodimer. Heterotetramer of two MnmE and two MnmG subunits. Requires K(+) as cofactor.

The protein localises to the cytoplasm. Functionally, exhibits a very high intrinsic GTPase hydrolysis rate. Involved in the addition of a carboxymethylaminomethyl (cmnm) group at the wobble position (U34) of certain tRNAs, forming tRNA-cmnm(5)s(2)U34. This Bacillus subtilis (strain 168) protein is tRNA modification GTPase MnmE.